The primary structure comprises 561 residues: Type II methyltransferase M.BstVI (561 aa).

This sequence belongs to the N(4)/N(6)-methyltransferase family.

It catalyses the reaction a 2'-deoxyadenosine in DNA + S-adenosyl-L-methionine = an N(6)-methyl-2'-deoxyadenosine in DNA + S-adenosyl-L-homocysteine + H(+). A gamma subtype methylase, recognizes the double-stranded sequence 5'-CTCGAG-3', methylates A-5 on both strands, and protects the DNA from cleavage by the BstVI endonuclease. The chain is Type II methyltransferase M.BstVI from Geobacillus stearothermophilus (Bacillus stearothermophilus).